The primary structure comprises 189 residues: Ribosome maturation factor RimP (189 aa).

Belongs to the RimP family.

Its subcellular location is the cytoplasm. Functionally, required for maturation of 30S ribosomal subunits. The sequence is that of Ribosome maturation factor RimP from Mycobacteroides abscessus (strain ATCC 19977 / DSM 44196 / CCUG 20993 / CIP 104536 / JCM 13569 / NCTC 13031 / TMC 1543 / L948) (Mycobacterium abscessus).